We begin with the raw amino-acid sequence, 741 residues long: Pentatricopeptide repeat-containing protein At3g58590 (741 aa).

20 PPR repeats span residues 48–78 (PVYVCNNIISLYEKLGEVSLAGKVFDQMPER), 79–113 (NKVSFNTIIKGYSKYGDVDKAWGVFSEMRYFGYLP), 114–146 (NQSTVSGLLSCASLDVRAGTQLHGLSLKYGLFM), 148–178 (DAFVGTCLLCLYGRLDLLEMAEQVFEDMPFK), 179–213 (SLETWNHMMSLLGHRGFLKECMFFFRELVRMGASL), 214–248 (TESSFLGVLKGVSCVKDLDISKQLHCSATKKGLDC), 249–279 (EISVVNSLISAYGKCGNTHMAERMFQDAGSW), 280–314 (DIVSWNAIICATAKSENPLKALKLFVSMPEHGFSP), 315–349 (NQGTYVSVLGVSSLVQLLSCGRQIHGMLIKNGCET), 350–380 (GIVLGNALIDFYAKCGNLEDSRLCFDYIRDK), 381–414 (NIVCWNALLSGYANKDGPICLSLFLQMLQMGFRP), 415–445 (TEYTFSTALKSCCVTELQQLHSVIVRMGYED), 446–481 (NDYVLSSLMRSYAKNQLMNDALLLLDWASGPTSVVP), 483–508 (NIVAGIYSRRGQYHESVKLISTLEQP), 509–543 (DTVSWNIAIAACSRSDYHEEVIELFKHMLQSNIRP), 544–578 (DKYTFVSILSLCSKLCDLTLGSSIHGLITKTDFSC), 580–610 (DTFVCNVLIDMYGKCGSIRSVMKVFEETREK), 611–645 (NLITWTALISCLGIHGYGQEALEKFKETLSLGFKP), 646–680 (DRVSFISILTACRHGGMVKEGMGLFQKMKDYGVEP), and 681–715 (EMDHYRCAVDLLARNGYLKEAEHLIREMPFPADAP).

It belongs to the PPR family. P subfamily.

The sequence is that of Pentatricopeptide repeat-containing protein At3g58590 from Arabidopsis thaliana (Mouse-ear cress).